The chain runs to 373 residues: Bifunctional enzyme IspD/IspF (373 aa).

The segment at 1 to 212 is 2-C-methyl-D-erythritol 4-phosphate cytidylyltransferase; that stretch reads MPDITLILLG…PCIEAPSGKT (212 aa). Residues 213–373 are 2-C-methyl-D-erythritol 2,4-cyclodiphosphate synthase; the sequence is LTGFGLDIHP…NLTYYNWKQK (161 aa). 2 residues coordinate a divalent metal cation: D219 and H221. Residues 219–221 and 245–246 each bind 4-CDP-2-C-methyl-D-erythritol 2-phosphate; these read DIH and HS. Position 253 (H253) interacts with a divalent metal cation. Residues 267 to 269, 272 to 276, 343 to 346, F350, and R353 each bind 4-CDP-2-C-methyl-D-erythritol 2-phosphate; these read DIG, YPDTD, and TTAE.

This sequence in the N-terminal section; belongs to the IspD/TarI cytidylyltransferase family. IspD subfamily. The protein in the C-terminal section; belongs to the IspF family. A divalent metal cation serves as cofactor.

It catalyses the reaction 2-C-methyl-D-erythritol 4-phosphate + CTP + H(+) = 4-CDP-2-C-methyl-D-erythritol + diphosphate. The enzyme catalyses 4-CDP-2-C-methyl-D-erythritol 2-phosphate = 2-C-methyl-D-erythritol 2,4-cyclic diphosphate + CMP. It participates in isoprenoid biosynthesis; isopentenyl diphosphate biosynthesis via DXP pathway; isopentenyl diphosphate from 1-deoxy-D-xylulose 5-phosphate: step 2/6. The protein operates within isoprenoid biosynthesis; isopentenyl diphosphate biosynthesis via DXP pathway; isopentenyl diphosphate from 1-deoxy-D-xylulose 5-phosphate: step 4/6. In terms of biological role, bifunctional enzyme that catalyzes the formation of 4-diphosphocytidyl-2-C-methyl-D-erythritol from CTP and 2-C-methyl-D-erythritol 4-phosphate (MEP) (IspD), and catalyzes the conversion of 4-diphosphocytidyl-2-C-methyl-D-erythritol 2-phosphate (CDP-ME2P) to 2-C-methyl-D-erythritol 2,4-cyclodiphosphate (ME-CPP) with a corresponding release of cytidine 5-monophosphate (CMP) (IspF). The protein is Bifunctional enzyme IspD/IspF of Sulfurovum sp. (strain NBC37-1).